Here is a 647-residue protein sequence, read N- to C-terminus: DNA mismatch repair protein MutL (647 aa).

It belongs to the DNA mismatch repair MutL/HexB family.

In terms of biological role, this protein is involved in the repair of mismatches in DNA. It is required for dam-dependent methyl-directed DNA mismatch repair. May act as a 'molecular matchmaker', a protein that promotes the formation of a stable complex between two or more DNA-binding proteins in an ATP-dependent manner without itself being part of a final effector complex. This is DNA mismatch repair protein MutL from Bacillus thuringiensis subsp. konkukian (strain 97-27).